The sequence spans 500 residues: Probable glycine dehydrogenase (decarboxylating) subunit 2 (500 aa).

The interval M1 to D25 is disordered. K263 is subject to N6-(pyridoxal phosphate)lysine.

The protein belongs to the GcvP family. C-terminal subunit subfamily. The glycine cleavage system is composed of four proteins: P, T, L and H. In this organism, the P 'protein' is a heterodimer of two subunits. It depends on pyridoxal 5'-phosphate as a cofactor.

It catalyses the reaction N(6)-[(R)-lipoyl]-L-lysyl-[glycine-cleavage complex H protein] + glycine + H(+) = N(6)-[(R)-S(8)-aminomethyldihydrolipoyl]-L-lysyl-[glycine-cleavage complex H protein] + CO2. In terms of biological role, the glycine cleavage system catalyzes the degradation of glycine. The P protein binds the alpha-amino group of glycine through its pyridoxal phosphate cofactor; CO(2) is released and the remaining methylamine moiety is then transferred to the lipoamide cofactor of the H protein. The polypeptide is Probable glycine dehydrogenase (decarboxylating) subunit 2 (Nitrosospira multiformis (strain ATCC 25196 / NCIMB 11849 / C 71)).